The following is a 444-amino-acid chain: tRNA modification GTPase MnmE (444 aa).

(6S)-5-formyl-5,6,7,8-tetrahydrofolate contacts are provided by Arg23, Glu82, and Lys121. Residues 216–365 enclose the TrmE-type G domain; sequence GTSIVLAGLP…LKQALQKWLN (150 aa). Asn226 lines the K(+) pocket. Residues 226-231, 245-251, and 270-273 contribute to the GTP site; these read NAGKSS, TDIPGTT, and DSAG. Mg(2+) is bound at residue Ser230. Residues Thr245, Ile247, and Thr250 each coordinate K(+). Thr251 lines the Mg(2+) pocket. Residue Lys444 participates in (6S)-5-formyl-5,6,7,8-tetrahydrofolate binding.

It belongs to the TRAFAC class TrmE-Era-EngA-EngB-Septin-like GTPase superfamily. TrmE GTPase family. Homodimer. Heterotetramer of two MnmE and two MnmG subunits. K(+) is required as a cofactor.

The protein resides in the cytoplasm. Exhibits a very high intrinsic GTPase hydrolysis rate. Involved in the addition of a carboxymethylaminomethyl (cmnm) group at the wobble position (U34) of certain tRNAs, forming tRNA-cmnm(5)s(2)U34. This Chlamydia trachomatis serovar A (strain ATCC VR-571B / DSM 19440 / HAR-13) protein is tRNA modification GTPase MnmE.